Consider the following 637-residue polypeptide: DNA gyrase subunit B (637 aa).

One can recognise a Toprim domain in the interval 421–535; the sequence is SEIYIVEGDS…HGYVYIAQPP (115 aa). Mg(2+)-binding residues include Glu427, Asp500, and Asp502.

The protein belongs to the type II topoisomerase GyrB family. As to quaternary structure, heterotetramer, composed of two GyrA and two GyrB chains. In the heterotetramer, GyrA contains the active site tyrosine that forms a transient covalent intermediate with DNA, while GyrB binds cofactors and catalyzes ATP hydrolysis. Mg(2+) is required as a cofactor. The cofactor is Mn(2+). Ca(2+) serves as cofactor.

It is found in the cytoplasm. It catalyses the reaction ATP-dependent breakage, passage and rejoining of double-stranded DNA.. Functionally, a type II topoisomerase that negatively supercoils closed circular double-stranded (ds) DNA in an ATP-dependent manner to modulate DNA topology and maintain chromosomes in an underwound state. Negative supercoiling favors strand separation, and DNA replication, transcription, recombination and repair, all of which involve strand separation. Also able to catalyze the interconversion of other topological isomers of dsDNA rings, including catenanes and knotted rings. Type II topoisomerases break and join 2 DNA strands simultaneously in an ATP-dependent manner. In Halalkalibacterium halodurans (strain ATCC BAA-125 / DSM 18197 / FERM 7344 / JCM 9153 / C-125) (Bacillus halodurans), this protein is DNA gyrase subunit B.